Consider the following 767-residue polypeptide: Polyketide biosynthesis protein PksE (767 aa).

The interval 1–312 is acyl transferase; that stretch reads MITYVFPGQG…QRNVQAGITA (312 aa). Active-site residues include S87 and H193.

The protein in the N-terminal section; belongs to the FabD family.

The protein localises to the cytoplasm. It carries out the reaction holo-[ACP] + malonyl-CoA = malonyl-[ACP] + CoA. It participates in antibiotic biosynthesis; bacillaene biosynthesis. In terms of biological role, probably involved in some intermediate steps for the synthesis of the antibiotic polyketide bacillaene which is involved in secondary metabolism. Probably has an acyl transferase activity and could also have a flavin mononucleotide-dependent oxidoreductase activity. The protein is Polyketide biosynthesis protein PksE (pksE) of Bacillus subtilis (strain 168).